The sequence spans 256 residues: uncharacterized protein (256 aa).

Residues I10–Y64 enclose the HTH cro/C1-type domain. Residues L21–R40 constitute a DNA-binding region (H-T-H motif).

This is an uncharacterized protein from Mycobacterium bovis (strain ATCC BAA-935 / AF2122/97).